The following is an 81-amino-acid chain: Photosystem I iron-sulfur center (81 aa).

4Fe-4S ferredoxin-type domains follow at residues 1–31 (MAHSVKIYDTCIGCTQCVRACPTDVLEMVPW) and 39–68 (IASAPRTEDCVGCKRCESACPTDYLSVRVY). Cys-11, Cys-14, Cys-17, Cys-21, Cys-48, Cys-51, Cys-54, and Cys-58 together coordinate [4Fe-4S] cluster.

In terms of assembly, the eukaryotic PSI reaction center is composed of at least 11 subunits. [4Fe-4S] cluster is required as a cofactor.

Its subcellular location is the plastid. The protein resides in the chloroplast thylakoid membrane. The catalysed reaction is reduced [plastocyanin] + hnu + oxidized [2Fe-2S]-[ferredoxin] = oxidized [plastocyanin] + reduced [2Fe-2S]-[ferredoxin]. Apoprotein for the two 4Fe-4S centers FA and FB of photosystem I (PSI); essential for photochemical activity. FB is the terminal electron acceptor of PSI, donating electrons to ferredoxin. The C-terminus interacts with PsaA/B/D and helps assemble the protein into the PSI complex. Required for binding of PsaD and PsaE to PSI. PSI is a plastocyanin-ferredoxin oxidoreductase, converting photonic excitation into a charge separation, which transfers an electron from the donor P700 chlorophyll pair to the spectroscopically characterized acceptors A0, A1, FX, FA and FB in turn. This is Photosystem I iron-sulfur center from Welwitschia mirabilis (Tree tumbo).